Consider the following 779-residue polypeptide: Pre-mRNA-splicing factor cef-1 (779 aa).

HTH myb-type domains are found at residues 1-56 (MPVV…DPSI) and 57-106 (KKIE…DEAE). DNA-binding regions (H-T-H motif) lie at residues 29–52 (WARVSSLLARKTPKQCKARWNEWL) and 80–102 (WRTIAPIVGRTANQCLERYQRLL). Disordered regions lie at residues 113 to 192 (LGLT…ESRR), 246 to 284 (EYQRAHFDPKKQQVGNKRKGEEDERDGKRRKGDKDPSVQ), 424 to 448 (TPLRAAGAGPGATPLRVGQTPLRTP), and 497 to 525 (WELELPDDQQEPKTAEQLEEDAAERDRRE). The span at 127–152 (SADDVRKLRPGEVDPDPETKPARPDT) shows a compositional bias: basic and acidic residues. Residues 157–204 (EDEKEMLSEARARLANTQGKKAKRKARERQQEESRRLAALQKRRELKT) adopt a coiled-coil conformation. 2 stretches are compositionally biased toward basic and acidic residues: residues 246–256 (EYQRAHFDPKK) and 263–281 (RKGEEDERDGKRRKGDKDP). Positions 653 to 772 (DEEEEQISTM…EELDALTLNG (120 aa)) form a coiled coil.

The protein belongs to the CEF1 family. Associated with the spliceosome.

The protein resides in the cytoplasm. Its subcellular location is the nucleus. Its function is as follows. Involved in pre-mRNA splicing and cell cycle control. The polypeptide is Pre-mRNA-splicing factor cef-1 (cef-1) (Neurospora crassa (strain ATCC 24698 / 74-OR23-1A / CBS 708.71 / DSM 1257 / FGSC 987)).